The chain runs to 502 residues: Ribose import ATP-binding protein RbsA (502 aa).

2 ABC transporter domains span residues 3–239 (VTMR…VGRE) and 249–493 (AAPG…TGGA). 35–42 (GENGAGKS) is an ATP binding site.

It belongs to the ABC transporter superfamily. Ribose importer (TC 3.A.1.2.1) family. In terms of assembly, the complex is composed of an ATP-binding protein (RbsA), two transmembrane proteins (RbsC) and a solute-binding protein (RbsB).

The protein localises to the cell inner membrane. The enzyme catalyses D-ribose(out) + ATP + H2O = D-ribose(in) + ADP + phosphate + H(+). In terms of biological role, part of the ABC transporter complex RbsABC involved in ribose import. Responsible for energy coupling to the transport system. The chain is Ribose import ATP-binding protein RbsA from Chromobacterium violaceum (strain ATCC 12472 / DSM 30191 / JCM 1249 / CCUG 213 / NBRC 12614 / NCIMB 9131 / NCTC 9757 / MK).